The primary structure comprises 367 residues: S-adenosylmethionine decarboxylase proenzyme 3 (367 aa).

Residues Glu-9 and Glu-12 contribute to the active site. Ser-69 functions as the Schiff-base intermediate with substrate; via pyruvic acid in the catalytic mechanism. The residue at position 69 (Ser-69) is a Pyruvic acid (Ser); by autocatalysis. The active-site Proton donor; for catalytic activity is Cys-83. Active-site proton acceptor; for processing activity residues include Ser-234 and His-247.

The protein belongs to the eukaryotic AdoMetDC family. The cofactor is pyruvate. Is synthesized initially as an inactive proenzyme. Formation of the active enzyme involves a self-maturation process in which the active site pyruvoyl group is generated from an internal serine residue via an autocatalytic post-translational modification. Two non-identical subunits are generated from the proenzyme in this reaction, and the pyruvate is formed at the N-terminus of the alpha chain, which is derived from the carboxyl end of the proenzyme. The post-translation cleavage follows an unusual pathway, termed non-hydrolytic serinolysis, in which the side chain hydroxyl group of the serine supplies its oxygen atom to form the C-terminus of the beta chain, while the remainder of the serine residue undergoes an oxidative deamination to produce ammonia and the pyruvoyl group blocking the N-terminus of the alpha chain.

The catalysed reaction is S-adenosyl-L-methionine + H(+) = S-adenosyl 3-(methylsulfanyl)propylamine + CO2. It participates in amine and polyamine biosynthesis; S-adenosylmethioninamine biosynthesis; S-adenosylmethioninamine from S-adenosyl-L-methionine: step 1/1. This Brassica juncea (Indian mustard) protein is S-adenosylmethionine decarboxylase proenzyme 3 (SAMDC3).